The following is a 141-amino-acid chain: Large ribosomal subunit protein uL11 (141 aa).

The protein belongs to the universal ribosomal protein uL11 family. Part of the ribosomal stalk of the 50S ribosomal subunit. Interacts with L10 and the large rRNA to form the base of the stalk. L10 forms an elongated spine to which L12 dimers bind in a sequential fashion forming a multimeric L10(L12)X complex. Post-translationally, one or more lysine residues are methylated.

Forms part of the ribosomal stalk which helps the ribosome interact with GTP-bound translation factors. This is Large ribosomal subunit protein uL11 from Chlamydia abortus (strain DSM 27085 / S26/3) (Chlamydophila abortus).